Consider the following 61-residue polypeptide: Large ribosomal subunit protein bL32 (61 aa).

Over residues 1–18 the composition is skewed to basic residues; that stretch reads MAIVPKRKTSKQRKRKRQ. Residues 1–20 form a disordered region; the sequence is MAIVPKRKTSKQRKRKRQTH.

This sequence belongs to the bacterial ribosomal protein bL32 family.

This is Large ribosomal subunit protein bL32 (rpmF) from Mycoplasmopsis pulmonis (strain UAB CTIP) (Mycoplasma pulmonis).